The primary structure comprises 219 residues: MKNDSAVVLFSGGQDSTTCLFWAKKHFKKVYALSFLYGQKHAHEVELARGIAERAGVEFHVMDTSFIGSLGSNSLTDTSISMDEDKPKDSFPNTFVPGRNLFFLSIAAVFAREQGAFHLVTGVSQTDYSGYPDCRDSFIKSLNVTLNLAMDEQFVIHTPLMWIDKAETWALADELGVFDLVRNETLTCYNGIPADGCGHCPACKLRKQGLEEYLSKRNR.

10–20 provides a ligand contact to ATP; that stretch reads FSGGQDSTTCL. Cysteine 188, cysteine 197, cysteine 200, and cysteine 203 together coordinate Zn(2+).

This sequence belongs to the QueC family. The cofactor is Zn(2+).

The enzyme catalyses 7-carboxy-7-deazaguanine + NH4(+) + ATP = 7-cyano-7-deazaguanine + ADP + phosphate + H2O + H(+). It participates in purine metabolism; 7-cyano-7-deazaguanine biosynthesis. Its function is as follows. Catalyzes the ATP-dependent conversion of 7-carboxy-7-deazaguanine (CDG) to 7-cyano-7-deazaguanine (preQ(0)). In Bacteroides fragilis (strain ATCC 25285 / DSM 2151 / CCUG 4856 / JCM 11019 / LMG 10263 / NCTC 9343 / Onslow / VPI 2553 / EN-2), this protein is 7-cyano-7-deazaguanine synthase.